The primary structure comprises 217 residues: Glycerol-3-phosphate acyltransferase (217 aa).

Helical transmembrane passes span 3–23, 56–76, 78–98, 120–140, 142–162, and 163–183; these read IVILLLVAYLLGSIPSGVWIG, VLLMDILKGTLATSLPYLFGL, GVNPLFFGVAAVLGHTFPIFA, FFIYSALIFVICLYLTSMVSL, SMISAVLITLSTIILPFTVPA, and ILPTFNWLLTVIAIALTTFIF.

Belongs to the PlsY family. In terms of assembly, probably interacts with PlsX.

It localises to the cell membrane. The enzyme catalyses an acyl phosphate + sn-glycerol 3-phosphate = a 1-acyl-sn-glycero-3-phosphate + phosphate. The protein operates within lipid metabolism; phospholipid metabolism. In terms of biological role, catalyzes the transfer of an acyl group from acyl-phosphate (acyl-PO(4)) to glycerol-3-phosphate (G3P) to form lysophosphatidic acid (LPA). This enzyme utilizes acyl-phosphate as fatty acyl donor, but not acyl-CoA or acyl-ACP. This is Glycerol-3-phosphate acyltransferase from Enterococcus faecalis (strain ATCC 700802 / V583).